We begin with the raw amino-acid sequence, 341 residues long: tRNA N6-adenosine threonylcarbamoyltransferase (341 aa).

The Fe cation site is built by histidine 111 and histidine 115. Substrate contacts are provided by residues 134-138 (LVSGG), aspartate 167, glycine 180, and asparagine 276. A Fe cation-binding site is contributed by aspartate 304.

This sequence belongs to the KAE1 / TsaD family. Fe(2+) serves as cofactor.

It is found in the cytoplasm. The catalysed reaction is L-threonylcarbamoyladenylate + adenosine(37) in tRNA = N(6)-L-threonylcarbamoyladenosine(37) in tRNA + AMP + H(+). Its function is as follows. Required for the formation of a threonylcarbamoyl group on adenosine at position 37 (t(6)A37) in tRNAs that read codons beginning with adenine. Is involved in the transfer of the threonylcarbamoyl moiety of threonylcarbamoyl-AMP (TC-AMP) to the N6 group of A37, together with TsaE and TsaB. TsaD likely plays a direct catalytic role in this reaction. In Pseudomonas putida (strain ATCC 700007 / DSM 6899 / JCM 31910 / BCRC 17059 / LMG 24140 / F1), this protein is tRNA N6-adenosine threonylcarbamoyltransferase.